A 199-amino-acid chain; its full sequence is B3 domain-containing protein Os06g0107800 (199 aa).

Residues 13-32 (QLQGGGGGHGGGGGGGGGER) form a disordered region. The span at 15–29 (QGGGGGHGGGGGGGG) shows a compositional bias: gly residues. A DNA-binding region (TF-B3) is located at residues 37 to 141 (FEKVVTPSDV…RLFIDCRKRA (105 aa)).

It is found in the nucleus. The protein is B3 domain-containing protein Os06g0107800 of Oryza sativa subsp. japonica (Rice).